A 440-amino-acid polypeptide reads, in one-letter code: Probable D-serine dehydratase (440 aa).

Lysine 120 is subject to N6-(pyridoxal phosphate)lysine.

It belongs to the serine/threonine dehydratase family. DsdA subfamily. It depends on pyridoxal 5'-phosphate as a cofactor.

It carries out the reaction D-serine = pyruvate + NH4(+). In Shouchella clausii (strain KSM-K16) (Alkalihalobacillus clausii), this protein is Probable D-serine dehydratase.